A 341-amino-acid polypeptide reads, in one-letter code: tRNA N6-adenosine threonylcarbamoyltransferase (341 aa).

Histidine 111 and histidine 115 together coordinate Fe cation. Residues 134–138 (LVSGG), aspartate 167, glycine 180, and asparagine 276 contribute to the substrate site. Aspartate 304 contacts Fe cation.

The protein belongs to the KAE1 / TsaD family. Requires Fe(2+) as cofactor.

It localises to the cytoplasm. It catalyses the reaction L-threonylcarbamoyladenylate + adenosine(37) in tRNA = N(6)-L-threonylcarbamoyladenosine(37) in tRNA + AMP + H(+). In terms of biological role, required for the formation of a threonylcarbamoyl group on adenosine at position 37 (t(6)A37) in tRNAs that read codons beginning with adenine. Is involved in the transfer of the threonylcarbamoyl moiety of threonylcarbamoyl-AMP (TC-AMP) to the N6 group of A37, together with TsaE and TsaB. TsaD likely plays a direct catalytic role in this reaction. The sequence is that of tRNA N6-adenosine threonylcarbamoyltransferase from Ectopseudomonas mendocina (strain ymp) (Pseudomonas mendocina).